The chain runs to 283 residues: Bifunctional protein FolD 1 (283 aa).

Residues 166-168 (GRS) and isoleucine 232 each bind NADP(+).

Belongs to the tetrahydrofolate dehydrogenase/cyclohydrolase family. In terms of assembly, homodimer.

The catalysed reaction is (6R)-5,10-methylene-5,6,7,8-tetrahydrofolate + NADP(+) = (6R)-5,10-methenyltetrahydrofolate + NADPH. The enzyme catalyses (6R)-5,10-methenyltetrahydrofolate + H2O = (6R)-10-formyltetrahydrofolate + H(+). It functions in the pathway one-carbon metabolism; tetrahydrofolate interconversion. Functionally, catalyzes the oxidation of 5,10-methylenetetrahydrofolate to 5,10-methenyltetrahydrofolate and then the hydrolysis of 5,10-methenyltetrahydrofolate to 10-formyltetrahydrofolate. The polypeptide is Bifunctional protein FolD 1 (Lactobacillus johnsonii (strain CNCM I-12250 / La1 / NCC 533)).